A 219-amino-acid polypeptide reads, in one-letter code: Elongation factor Ts (219 aa).

The segment at 83 to 86 (TDFV) is involved in Mg(2+) ion dislocation from EF-Tu.

This sequence belongs to the EF-Ts family.

It localises to the cytoplasm. Functionally, associates with the EF-Tu.GDP complex and induces the exchange of GDP to GTP. It remains bound to the aminoacyl-tRNA.EF-Tu.GTP complex up to the GTP hydrolysis stage on the ribosome. This chain is Elongation factor Ts, found in Synechococcus sp. (strain WH7803).